We begin with the raw amino-acid sequence, 216 residues long: DNA-directed RNA polymerase subunit alpha (216 aa).

It belongs to the RNA polymerase alpha chain family. In terms of assembly, in plastids the minimal PEP RNA polymerase catalytic core is composed of four subunits: alpha, beta, beta', and beta''. When a (nuclear-encoded) sigma factor is associated with the core the holoenzyme is formed, which can initiate transcription.

The protein localises to the plastid. It localises to the chloroplast. It catalyses the reaction RNA(n) + a ribonucleoside 5'-triphosphate = RNA(n+1) + diphosphate. Functionally, DNA-dependent RNA polymerase catalyzes the transcription of DNA into RNA using the four ribonucleoside triphosphates as substrates. The sequence is that of DNA-directed RNA polymerase subunit alpha (rpoA) from Euglena granulata.